A 257-amino-acid chain; its full sequence is Acyl-[acyl-carrier-protein]--UDP-N-acetylglucosamine O-acyltransferase (257 aa).

The protein belongs to the transferase hexapeptide repeat family. LpxA subfamily. Homotrimer.

It localises to the cytoplasm. The enzyme catalyses a (3R)-hydroxyacyl-[ACP] + UDP-N-acetyl-alpha-D-glucosamine = a UDP-3-O-[(3R)-3-hydroxyacyl]-N-acetyl-alpha-D-glucosamine + holo-[ACP]. The protein operates within glycolipid biosynthesis; lipid IV(A) biosynthesis; lipid IV(A) from (3R)-3-hydroxytetradecanoyl-[acyl-carrier-protein] and UDP-N-acetyl-alpha-D-glucosamine: step 1/6. Its function is as follows. Involved in the biosynthesis of lipid A, a phosphorylated glycolipid that anchors the lipopolysaccharide to the outer membrane of the cell. The polypeptide is Acyl-[acyl-carrier-protein]--UDP-N-acetylglucosamine O-acyltransferase (Fusobacterium nucleatum subsp. nucleatum (strain ATCC 25586 / DSM 15643 / BCRC 10681 / CIP 101130 / JCM 8532 / KCTC 2640 / LMG 13131 / VPI 4355)).